The sequence spans 688 residues: Protein sel-1 homolog 2 (688 aa).

The signal sequence occupies residues 1–18 (MNPLALLVEILIIIEVTT). At 19–662 (KNTEAERYNR…KWKWLKLDST (644 aa)) the chain is on the extracellular side. Asn34 carries N-linked (GlcNAc...) asparagine glycosylation. 11 Sel1-like repeats span residues 107–142 (GDELFKMGNKILQESKSQKQKTEAYTLFTRAANMGN), 143–178 (LKAMEKMADAWLFGSFGMQNITAAIQLYESLAKEGS), 179–214 (YKAQNALGFLSSYGIGMEYDQAKALIYYTFGSAGGS), 215–250 (MMSQMILGYRYLSGINVLQNCEVALNHYKKVADYIA), 297–333 (VQIQVSLGQLHLIGRKGLDQDYSKALYYFLKAAKAGS), 334–370 (ANAMAFIGKMYFEGNAAAPQNNATAFKYFSMAASKGN), 371–406 (AIGLHGLGLLYFHGKGVPVNYGEALKYFQKAAEKGW), 407–442 (PNAQFQLGFMYYSGSGVWKDYKLAFKYFYLASQSGQ), 443–478 (PLAIYYLAEMYATGTGVLRSCRTAVELYKGVCELGH), 551–586 (AFARVKIGDYHYYGYGTKKDYETAATHYSIAADKHH), and 588–623 (AQAMFNLAYMYEHGLGIAKDIHLARRLYDMAAQTSP). N-linked (GlcNAc...) asparagine glycosylation is present at Asn162. The helical transmembrane segment at 663-683 (VGPYWDLLVIGLIVAMLIFLL) threads the bilayer. At 684–688 (RNRHR) the chain is on the cytoplasmic side.

This sequence belongs to the sel-1 family.

It localises to the membrane. The protein resides in the cell projection. It is found in the cilium. Its subcellular location is the nucleus speckle. This chain is Protein sel-1 homolog 2 (Sel1l2), found in Mus musculus (Mouse).